The primary structure comprises 953 residues: Scaffold attachment factor B2 (953 aa).

The segment at 1 to 29 is disordered; that stretch reads MAETLPGSGDSGPGTASLGPGVAETGTRR. A2 is subject to N-acetylalanine. The SAP domain maps to 30-64; sequence LSELRVIDLRAELKKRNLDTGGNKSVLMERLKKAV. S54 carries the phosphoserine modification. K65 is covalently cross-linked (Glycyl lysine isopeptide (Lys-Gly) (interchain with G-Cter in SUMO1); alternate). K65 participates in a covalent cross-link: Glycyl lysine isopeptide (Lys-Gly) (interchain with G-Cter in SUMO2); alternate. Residues 91 to 114 form a disordered region; that stretch reads KGLKMEEEGTEDNGLEDDSRDGQE. K94 participates in a covalent cross-link: Glycyl lysine isopeptide (Lys-Gly) (interchain with G-Cter in SUMO2). Acidic residues predominate over residues 98–114; it reads EGTEDNGLEDDSRDGQE. A phosphoserine mark is found at S109 and S158. Glycyl lysine isopeptide (Lys-Gly) (interchain with G-Cter in SUMO2) cross-links involve residues K188 and K199. A Phosphothreonine modification is found at T201. Position 207 is a phosphoserine (S207). The segment at 219-404 is disordered; sequence ILGETCKSEP…KDEKGRVGSG (186 aa). Positions 224–233 are enriched in basic and acidic residues; sequence CKSEPVKEES. Residue K230 forms a Glycyl lysine isopeptide (Lys-Gly) (interchain with G-Cter in SUMO) linkage. The segment covering 274–285 has biased composition (polar residues); that stretch reads SESTAHAQSSKA. The span at 292 to 308 shows a compositional bias: basic and acidic residues; sequence VKREPAEQPGDGERTDC. A Glycyl lysine isopeptide (Lys-Gly) (interchain with G-Cter in SUMO) cross-link involves residue K293. The span at 318-329 shows a compositional bias: low complexity; the sequence is EQSSAASELAEA. Over residues 345 to 358 the composition is skewed to basic and acidic residues; it reads EARDSKEDGRKFDF. Positions 370–382 are enriched in polar residues; it reads ESSTSEGADQKMS. Residues K380, K385, K388, K391, and K395 each participate in a glycyl lysine isopeptide (Lys-Gly) (interchain with G-Cter in SUMO2) cross-link. Residues 383 to 400 are compositionally biased toward basic and acidic residues; it reads SFKEEKDIKPIIKDEKGR. One can recognise an RRM domain in the interval 407 to 485; it reads RNLWVSGLSS…RMISVEKAKN (79 aa). Phosphoserine occurs at positions 507 and 513. Residues K517, K524, K525, K541, K542, and K551 each participate in a glycyl lysine isopeptide (Lys-Gly) (interchain with G-Cter in SUMO2) cross-link. Residues 525 to 551 show a composition bias toward basic and acidic residues; it reads KEEKIEKKEEKKPEDIKKEEKDQDELK. Disordered stretches follow at residues 525-665 and 684-953; these read KEEK…RLQR and RERL…TRRY. Residues 555–564 show a composition bias toward polar residues; sequence TNRSRVTKSG. A compositionally biased stretch (basic and acidic residues) spans 567-579; it reads GMERTVVMDKSKG. Residues K578, K586, and K608 each participate in a glycyl lysine isopeptide (Lys-Gly) (interchain with G-Cter in SUMO2) cross-link. Basic and acidic residues-rich tracts occupy residues 590–665 and 684–820; these read RSKE…RLQR and RERL…DSRD. Positions 600-953 are interaction with SAFB1; that stretch reads DRKSESKEKR…PPYPHFTRRY (354 aa). A Glycyl lysine isopeptide (Lys-Gly) (interchain with G-Cter in SUMO2); alternate cross-link involves residue K616. At K616 the chain carries N6-acetyllysine; alternate. A Nuclear localization signal motif is present at residues 713 to 730; sequence RRQQEQLRYEQERRPGRR. S787 and S832 each carry phosphoserine. Over residues 843 to 859 the composition is skewed to basic and acidic residues; the sequence is GGRDWGEHNQRLEEHQA. A compositionally biased stretch (gly residues) spans 881 to 890; it reads GERGLSGPSG. S886 is modified (phosphoserine). Omega-N-methylarginine is present on residues R897 and R903. The span at 899 to 927 shows a compositional bias: gly residues; it reads GVAGRGGFAQGGHSQGHVVPGGGLEGGGV.

Interacts with SAFB/SAFB1 and SCAM1. Interacts with isoform 2 SRPK1 and inhibits its activity. As to expression, expressed at high levels in the CNS and at low levels in the liver. Expressed in a wide number of breast cancer cell lines.

It is found in the cytoplasm. Its subcellular location is the nucleus. Its function is as follows. Binds to scaffold/matrix attachment region (S/MAR) DNA. Can function as an estrogen receptor corepressor and can also inhibit cell proliferation. This chain is Scaffold attachment factor B2 (SAFB2), found in Homo sapiens (Human).